The chain runs to 120 residues: MSDNITSASATARFVRVSPMKARRVIDLVRGKTVVEALSILKYAPQAASEPVAKVVASAAANAENNFGLDPRTLVISEAYANEGPTMKRFQPRAQGRAFQIRKRSSHITVVVESQKEGAN.

This sequence belongs to the universal ribosomal protein uL22 family. In terms of assembly, part of the 50S ribosomal subunit.

Functionally, this protein binds specifically to 23S rRNA; its binding is stimulated by other ribosomal proteins, e.g. L4, L17, and L20. It is important during the early stages of 50S assembly. It makes multiple contacts with different domains of the 23S rRNA in the assembled 50S subunit and ribosome. In terms of biological role, the globular domain of the protein is located near the polypeptide exit tunnel on the outside of the subunit, while an extended beta-hairpin is found that lines the wall of the exit tunnel in the center of the 70S ribosome. The protein is Large ribosomal subunit protein uL22 of Corynebacterium glutamicum (strain R).